The primary structure comprises 132 residues: Small ribosomal subunit protein eS24 (132 aa).

Residues 91–132 (LATHGLYEKKKTSRKQRTERQNRMKKVRSIKKASVGAAGKKN) are disordered. Residues 96–112 (LYEKKKTSRKQRTERQN) are compositionally biased toward basic and acidic residues.

Belongs to the eukaryotic ribosomal protein eS24 family. As to quaternary structure, component of the small ribosomal subunit.

Its subcellular location is the cytoplasm. Its function is as follows. Component of the small ribosomal subunit. The ribosome is a large ribonucleoprotein complex responsible for the synthesis of proteins in the cell. Required for processing of pre-rRNA and maturation of 40S ribosomal subunits. In Oryzias latipes (Japanese rice fish), this protein is Small ribosomal subunit protein eS24 (rps24).